Here is a 384-residue protein sequence, read N- to C-terminus: 1-deoxy-D-xylulose 5-phosphate reductoisomerase (384 aa).

The NADPH site is built by Thr-10, Gly-11, Ser-12, Ile-13, Gly-36, and Asn-122. Lys-123 serves as a coordination point for 1-deoxy-D-xylulose 5-phosphate. Glu-124 contributes to the NADPH binding site. Residue Asp-148 coordinates Mn(2+). Positions 149, 150, 174, and 197 each coordinate 1-deoxy-D-xylulose 5-phosphate. Glu-150 lines the Mn(2+) pocket. Residue Gly-203 coordinates NADPH. 4 residues coordinate 1-deoxy-D-xylulose 5-phosphate: Ser-210, Asn-215, Lys-216, and Glu-219. Mn(2+) is bound at residue Glu-219.

This sequence belongs to the DXR family. Requires Mg(2+) as cofactor. It depends on Mn(2+) as a cofactor.

The enzyme catalyses 2-C-methyl-D-erythritol 4-phosphate + NADP(+) = 1-deoxy-D-xylulose 5-phosphate + NADPH + H(+). It functions in the pathway isoprenoid biosynthesis; isopentenyl diphosphate biosynthesis via DXP pathway; isopentenyl diphosphate from 1-deoxy-D-xylulose 5-phosphate: step 1/6. In terms of biological role, catalyzes the NADPH-dependent rearrangement and reduction of 1-deoxy-D-xylulose-5-phosphate (DXP) to 2-C-methyl-D-erythritol 4-phosphate (MEP). This Chlorobium phaeobacteroides (strain DSM 266 / SMG 266 / 2430) protein is 1-deoxy-D-xylulose 5-phosphate reductoisomerase.